The primary structure comprises 959 residues: Bifunctional premutilin synthase (959 aa).

The interval 1–542 (MGLSEDLHAR…ALNVPIPRFD (542 aa)) is class II diterpene cyclase. The short motif at 309-312 (DADM) is the DXDD motif element. The active-site For class II diterpene cyclase activity is the Asp311. The tract at residues 543 to 959 (PSSISTLPAI…TANGSNGIHH (417 aa)) is class I diterpene synthase. Asp649 serves as the catalytic For class I diterpene synthase activity. 3 residues coordinate Mg(2+): Asp649, Asp653, and Asn824. A DDXXD motif motif is present at residues 649-653 (DDYLD). Residues 931–959 (KGTNGVKKINGSSTNGTKVTANGSNGIHH) are disordered. Residues 940 to 959 (NGSSTNGTKVTANGSNGIHH) are compositionally biased toward polar residues.

It belongs to the terpene synthase family. It depends on Mg(2+) as a cofactor.

It functions in the pathway secondary metabolite biosynthesis; terpenoid biosynthesis. Its function is as follows. Bifunctional premutilin synthase; part of the gene cluster that mediates the biosynthesis of pleuromutilin, a tricyclic diterpene showing antibacterial properties. The geranylgeranyl diphosphate (GGPP) synthase catalyzes the first step in pleuromutilin biosynthesis. GGPP is then substrate of the premutilin synthase (PS) to yield premutilin. Premutilin synthase is a bifunctional enzyme composed of the fusion of a class II diterpene cyclase (DTC) and a class I diterpene synthase (DTS), with the corresponding domains and active sites containing characteristic aspartate-rich motifs. GGPP is first converted to mutildienyl-diphosphate (MPP) at the class II DTC site. MPP is subsequently further cyclized at the class I DTS site, followed by a 1,5-hydride shift and addition of water prior to terminating deprotonation, to yield premutilin. In addition to the aforementioned GGPP synthase and bifunctional diterpene synthase, the cluster also contains three cytochrome P450 monooxygenases, a short-chain alcohol dehydrogenase, and an acyltransferase, involved in the conversion of premutilin to pleuromutilin. The cytochrome P450 monooxygenases P450-1 and P450-2 hydroxylate premutilin at C-11 and C-3, respectively, producing 11-hydroxypremutilin and 3-hydroxypremutilin. The combination of the actions of both ple5 and ple6 leads to the production of 3,11-dihydroxypremutilin. The short chain dehydrogenase SDR further converts 3,11-dihydroxypremutilin into mutilin. The acetyltransferase ATF then acetylates mutilin to produce 14-O-acetylmutilin. Finally, the cytochrome P450 monooxygenase P450-3 catalyzes hydroxylation on the alpha position of the acetyl side chain of 14-O-acetylmutilin to yield pleuromutilin. The polypeptide is Bifunctional premutilin synthase (Clitopilus passeckerianus (Pleurotus passeckerianus)).